We begin with the raw amino-acid sequence, 198 residues long: Thymidine kinase (198 aa).

ATP-binding positions include 15 to 22 (GCMFSGKT) and 87 to 90 (DEAQ). Glutamate 88 serves as the catalytic Proton acceptor. 4 residues coordinate Zn(2+): cysteine 144, cysteine 147, cysteine 182, and histidine 185.

It belongs to the thymidine kinase family. In terms of assembly, homotetramer.

It localises to the cytoplasm. It carries out the reaction thymidine + ATP = dTMP + ADP + H(+). The protein is Thymidine kinase of Coprothermobacter proteolyticus (strain ATCC 35245 / DSM 5265 / OCM 4 / BT).